The following is a 310-amino-acid chain: Methionyl-tRNA formyltransferase (310 aa).

Residue 110–113 (SVLP) participates in (6S)-5,6,7,8-tetrahydrofolate binding. Residues 283–310 (TVQPPGKKSMNAADWARGARAEDIRRAR) form a disordered region. Residues 299–310 (RGARAEDIRRAR) show a composition bias toward basic and acidic residues.

This sequence belongs to the Fmt family.

It catalyses the reaction L-methionyl-tRNA(fMet) + (6R)-10-formyltetrahydrofolate = N-formyl-L-methionyl-tRNA(fMet) + (6S)-5,6,7,8-tetrahydrofolate + H(+). In terms of biological role, attaches a formyl group to the free amino group of methionyl-tRNA(fMet). The formyl group appears to play a dual role in the initiator identity of N-formylmethionyl-tRNA by promoting its recognition by IF2 and preventing the misappropriation of this tRNA by the elongation apparatus. This Mycolicibacterium gilvum (strain PYR-GCK) (Mycobacterium gilvum (strain PYR-GCK)) protein is Methionyl-tRNA formyltransferase.